The sequence spans 168 residues: Small ribosomal subunit protein uS5 (168 aa).

The S5 DRBM domain occupies 13-76 (IQEKLVAVRR…ENARRNMISV (64 aa)).

This sequence belongs to the universal ribosomal protein uS5 family. As to quaternary structure, part of the 30S ribosomal subunit. Contacts proteins S4 and S8.

Its function is as follows. With S4 and S12 plays an important role in translational accuracy. Functionally, located at the back of the 30S subunit body where it stabilizes the conformation of the head with respect to the body. The sequence is that of Small ribosomal subunit protein uS5 from Coxiella burnetii (strain RSA 493 / Nine Mile phase I).